Here is a 325-residue protein sequence, read N- to C-terminus: Phosphatidylglycerol--prolipoprotein diacylglyceryl transferase (325 aa).

The next 4 helical transmembrane spans lie at 19–39 (IPLRGYAFCIIIGVFVAVWFG), 47–67 (GGKAGTVADVAVWAVPFGLVG), 93–113 (IWEGGLGIWGAIAFGAVGAWI), and 119–139 (GIPLPAWADALAPGIAIAQAI). Residue R141 coordinates a 1,2-diacyl-sn-glycero-3-phospho-(1'-sn-glycerol). The next 3 membrane-spanning stretches (helical) occupy residues 175–195 (HPTFLYESLWCIGVALLVIWA), 207–225 (FALYVAGYCAGRGWIEYMR), and 237–257 (LNVWTAIVVFILAVVYIVISA). Positions 266–312 (IVEPDRDATPAEKDGSGEDGSGEKGVAKADAAAKDPLTKDEPGKDAT) are enriched in basic and acidic residues. The interval 266-325 (IVEPDRDATPAEKDGSGEDGSGEKGVAKADAAAKDPLTKDEPGKDATAENAGAAGAAEKA) is disordered. Residues 313–325 (AENAGAAGAAEKA) show a composition bias toward low complexity.

The protein belongs to the Lgt family.

It localises to the cell membrane. It catalyses the reaction L-cysteinyl-[prolipoprotein] + a 1,2-diacyl-sn-glycero-3-phospho-(1'-sn-glycerol) = an S-1,2-diacyl-sn-glyceryl-L-cysteinyl-[prolipoprotein] + sn-glycerol 1-phosphate + H(+). It participates in protein modification; lipoprotein biosynthesis (diacylglyceryl transfer). Functionally, catalyzes the transfer of the diacylglyceryl group from phosphatidylglycerol to the sulfhydryl group of the N-terminal cysteine of a prolipoprotein, the first step in the formation of mature lipoproteins. The polypeptide is Phosphatidylglycerol--prolipoprotein diacylglyceryl transferase (Streptomyces griseus subsp. griseus (strain JCM 4626 / CBS 651.72 / NBRC 13350 / KCC S-0626 / ISP 5235)).